The primary structure comprises 327 residues: DNA primase large subunit PriL (327 aa).

[4Fe-4S] cluster contacts are provided by Cys218, Cys290, Cys299, and Cys307.

The protein belongs to the eukaryotic-type primase large subunit family. In terms of assembly, heterodimer of a small subunit (PriS) and a large subunit (PriL). [4Fe-4S] cluster is required as a cofactor.

Its function is as follows. Regulatory subunit of DNA primase, an RNA polymerase that catalyzes the synthesis of short RNA molecules used as primers for DNA polymerase during DNA replication. Stabilizes and modulates the activity of the small subunit, increasing the rate of DNA synthesis, and conferring RNA synthesis capability. The DNA polymerase activity may enable DNA primase to also catalyze primer extension after primer synthesis. May also play a role in DNA repair. The sequence is that of DNA primase large subunit PriL from Thermoplasma volcanium (strain ATCC 51530 / DSM 4299 / JCM 9571 / NBRC 15438 / GSS1).